A 422-amino-acid chain; its full sequence is D-amino acid dehydrogenase (422 aa).

3 to 17 provides a ligand contact to FAD; it reads VVVIGAGVVGTASAW.

The protein belongs to the DadA oxidoreductase family. FAD serves as cofactor.

It catalyses the reaction a D-alpha-amino acid + A + H2O = a 2-oxocarboxylate + AH2 + NH4(+). The protein operates within amino-acid degradation; D-alanine degradation; NH(3) and pyruvate from D-alanine: step 1/1. In terms of biological role, oxidative deamination of D-amino acids. The protein is D-amino acid dehydrogenase of Paramagnetospirillum magneticum (strain ATCC 700264 / AMB-1) (Magnetospirillum magneticum).